The chain runs to 294 residues: Glyceraldehyde-3-phosphate dehydrogenase (294 aa).

The NAD(+) site is built by Asp-19, Lys-63, and Thr-105. Residues 134-136, Thr-165, 194-195, and Arg-217 contribute to the D-glyceraldehyde 3-phosphate site; these read SCT and TG. Catalysis depends on Cys-135, which acts as the Nucleophile.

Belongs to the glyceraldehyde-3-phosphate dehydrogenase family. In terms of assembly, homotetramer.

It is found in the cytoplasm. It carries out the reaction D-glyceraldehyde 3-phosphate + phosphate + NAD(+) = (2R)-3-phospho-glyceroyl phosphate + NADH + H(+). The protein operates within carbohydrate degradation; glycolysis; pyruvate from D-glyceraldehyde 3-phosphate: step 1/5. Catalyzes the oxidative phosphorylation of glyceraldehyde 3-phosphate (G3P) to 1,3-bisphosphoglycerate (BPG) using the cofactor NAD. The first reaction step involves the formation of a hemiacetal intermediate between G3P and a cysteine residue, and this hemiacetal intermediate is then oxidized to a thioester, with concomitant reduction of NAD to NADH. The reduced NADH is then exchanged with the second NAD, and the thioester is attacked by a nucleophilic inorganic phosphate to produce BPG. This Klebsiella aerogenes (Enterobacter aerogenes) protein is Glyceraldehyde-3-phosphate dehydrogenase (gap).